A 528-amino-acid chain; its full sequence is Protein arginine N-methyltransferase 3 (528 aa).

Positions 1–43 (MCSLAAGNGRGAELGPEPLELSDSGDDAGWEDEDADTEPAHGR) are disordered. Cys-2 is modified (N-acetylcysteine). 2 positions are modified to phosphoserine: Ser-22 and Ser-24. Residues 23 to 37 (DSGDDAGWEDEDADT) are compositionally biased toward acidic residues. The C2H2-type zinc-finger motif lies at 46–69 (TPCLFCDRLFASAEETFSHCKLEH). Residue Ser-169 is modified to Phosphoserine. The mediates interaction with ALDH1A1 stretch occupies residues 184-528 (MKQFAQDFVM…NSSTQTYSLQ (345 aa)). Residues 214–528 (DGVYFSSYGH…NSSTQTYSLQ (315 aa)) form the SAM-dependent MTase PRMT-type domain. Arg-236, Gly-260, Asp-282, Ser-284, Ile-310, and Glu-311 together coordinate S-adenosyl-L-homocysteine. Catalysis depends on residues Glu-326 and Glu-335.

This sequence belongs to the class I-like SAM-binding methyltransferase superfamily. Protein arginine N-methyltransferase family. As to quaternary structure, monomer and homodimer. Interacts with EPB41L3 (via FERM domain); the interaction is direct and inhibits the protein-arginine N-methyltransferase activity of PRMT3. Interacts with the 40S ribosomal protein RPS2. Interacts with ALDH1A1; the interaction is direct, inhibits ALDH1A1 aldehyde dehydrogenase activity and is independent of the methyltransferase activity of PRMT3.

It is found in the cytoplasm. Its subcellular location is the cytosol. The protein resides in the nucleus. The enzyme catalyses L-arginyl-[protein] + S-adenosyl-L-methionine = N(omega)-methyl-L-arginyl-[protein] + S-adenosyl-L-homocysteine + H(+). It carries out the reaction L-arginyl-[protein] + 2 S-adenosyl-L-methionine = N(omega),N(omega)-dimethyl-L-arginyl-[protein] + 2 S-adenosyl-L-homocysteine + 2 H(+). Its activity is regulated as follows. Inhibited by N-ethylmaleimide and high concentrations of zinc chloride. In terms of biological role, protein-arginine N-methyltransferase that catalyzes both the monomethylation and asymmetric dimethylation of the guanidino nitrogens of arginine residues in target proteins, and therefore falls into the group of type I methyltransferases. Catalyzes the asymmetric arginine dimethylation at multiple sites in the Arg/Gly-rich region of small ribosomal subunit protein uS5/RPS2. Also appears to methylate other ribosomal proteins. May regulate retinoic acid synthesis and signaling by inhibiting ALDH1A1 retinal dehydrogenase activity. Contributes to methylation of histone H4 'Arg-3', a specific tag for epigenetic transcriptional activation. Promotes osteogenesis. The sequence is that of Protein arginine N-methyltransferase 3 from Mus musculus (Mouse).